The sequence spans 671 residues: Solute carrier family 5 member 4 (671 aa).

The Cytoplasmic segment spans residues 1–38 (MPAMGTALPRAMASTASVSTSTGSSELSSLSDNINNPA). A helical transmembrane segment spans residues 39–59 (DISVIVIYFVVVMAVGVWAMV). Residues 60 to 65 (KTNRST) are Extracellular-facing. The helical transmembrane segment at 66–86 (VGGFFLAGRSMTWWPMGASLF) threads the bilayer. At 87–89 (ASN) the chain is on the cytoplasmic side. A helical transmembrane segment spans residues 90-110 (IGSGHFVGLAGTGAATGIAVT). The Extracellular portion of the chain corresponds to 111 to 116 (AFESHS). The chain crosses the membrane as a helical span at residues 117-137 (FALLLVLGWFFVPIYIKAGVM). At 138-159 (TMPEYLRKRFGGKRLQIYLSVL) the chain is on the cytoplasmic side. The helical transmembrane segment at 160 to 180 (SLFICVILTISADIFSGAIFI) threads the bilayer. Position 181 (Lys-181) is a topological domain, extracellular. Residues 182-202 (LALGLDLYLAIFILLAITAVF) traverse the membrane as a helical segment. Residues 203–218 (TITGGLASVIYTDTLQ) lie on the Cytoplasmic side of the membrane. A helical membrane pass occupies residues 219–239 (AIIMLVGSFILMIYAFVEVGG). Residues 240 to 288 (YESFTEKYMNAIPSVVEGDNLTISPKCYTPQPDSFHIFRDAVTGDIPWP) are Extracellular-facing. Residues 289 to 309 (GTAFGMPITALWYWCINQVIV) traverse the membrane as a helical segment. Residues 310–324 (QRCLCGKNMSHVKAA) are Cytoplasmic-facing. The chain crosses the membrane as a helical span at residues 325–345 (CIVCGYLKLLPIFFMVMPGMI). Topologically, residues 346–378 (SRILYTDMVACVVPSECVKQCGVDVGCTNYAYP) are extracellular. A helical transmembrane segment spans residues 379–399 (MLVLKLMPMGLRGLMLSVMLA). Over 400–434 (SLMSSLTSIFNSASTLFTMDLYTKIRKKASERELL) the chain is Cytoplasmic. The helical transmembrane segment at 435-455 (IAGRLFVSVLIVTSILWVPIV) threads the bilayer. Over 456–467 (EVSQGGQLIHYT) the chain is Extracellular. Residues 468 to 488 (EAISSYLGPPIAAVFLVAIFC) traverse the membrane as a helical segment. Residues 489–494 (KRVNEQ) are Cytoplasmic-facing. A helical transmembrane segment spans residues 495–515 (GAFWGLMVGLVLGLIRMIAEF). Residues 516–537 (SYGTGSCLAPSSCPKVICGVHY) are Extracellular-facing. The helical transmembrane segment at 538 to 558 (LYYAIILFFVSILVILGVSYL) threads the bilayer. Over 559 to 650 (TKPIPDVHLY…DTSEKPFWRT (92 aa)) the chain is Cytoplasmic. Acidic residues predominate over residues 583-593 (DLDAEDREENE). The disordered stretch occupies residues 583–604 (DLDAEDREENEADARTEEDQTE). A compositionally biased stretch (basic and acidic residues) spans 594-604 (ADARTEEDQTE). The chain crosses the membrane as a helical span at residues 651–671 (VVNVNVIVLLAVAAFFYGYFA).

The protein belongs to the sodium:solute symporter (SSF) (TC 2.A.21) family.

The protein resides in the cell membrane. Functionally, generates D-glucose-induced depolarization in a pH-dependent and Na(+)-independent manner, with activity in acidic conditions (pH 5) but not neutral conditions. The sequence is that of Solute carrier family 5 member 4 from Rattus norvegicus (Rat).